A 470-amino-acid chain; its full sequence is Siroheme synthase (470 aa).

Residues Met-1–Leu-213 form a precorrin-2 dehydrogenase /sirohydrochlorin ferrochelatase region. NAD(+) is bound by residues Gly-28–Ile-29 and Pro-49–Arg-50. The uroporphyrinogen-III C-methyltransferase stretch occupies residues Gly-224–Thr-470. Position 233 (Pro-233) interacts with S-adenosyl-L-methionine. Asp-256 serves as the catalytic Proton acceptor. Lys-278 functions as the Proton donor in the catalytic mechanism. S-adenosyl-L-methionine contacts are provided by residues Gly-309–Asp-311, Ile-314, Thr-339–Ala-340, Met-392, and Gly-421.

This sequence in the N-terminal section; belongs to the precorrin-2 dehydrogenase / sirohydrochlorin ferrochelatase family. The protein in the C-terminal section; belongs to the precorrin methyltransferase family.

The catalysed reaction is uroporphyrinogen III + 2 S-adenosyl-L-methionine = precorrin-2 + 2 S-adenosyl-L-homocysteine + H(+). It catalyses the reaction precorrin-2 + NAD(+) = sirohydrochlorin + NADH + 2 H(+). It carries out the reaction siroheme + 2 H(+) = sirohydrochlorin + Fe(2+). It participates in cofactor biosynthesis; adenosylcobalamin biosynthesis; precorrin-2 from uroporphyrinogen III: step 1/1. It functions in the pathway cofactor biosynthesis; adenosylcobalamin biosynthesis; sirohydrochlorin from precorrin-2: step 1/1. Its pathway is porphyrin-containing compound metabolism; siroheme biosynthesis; precorrin-2 from uroporphyrinogen III: step 1/1. The protein operates within porphyrin-containing compound metabolism; siroheme biosynthesis; siroheme from sirohydrochlorin: step 1/1. It participates in porphyrin-containing compound metabolism; siroheme biosynthesis; sirohydrochlorin from precorrin-2: step 1/1. In terms of biological role, multifunctional enzyme that catalyzes the SAM-dependent methylations of uroporphyrinogen III at position C-2 and C-7 to form precorrin-2 via precorrin-1. Then it catalyzes the NAD-dependent ring dehydrogenation of precorrin-2 to yield sirohydrochlorin. Finally, it catalyzes the ferrochelation of sirohydrochlorin to yield siroheme. In Gluconacetobacter diazotrophicus (strain ATCC 49037 / DSM 5601 / CCUG 37298 / CIP 103539 / LMG 7603 / PAl5), this protein is Siroheme synthase.